A 106-amino-acid polypeptide reads, in one-letter code: MMDSSPEKTNLELLYEQVCEQGREFEVVFYPMLPRLYEMMLPSLEARLNFLSVGYRHVAFSRYVHGDVDCVHREVMAQKMVLLTSILSKLLNVNGILEHQEYLNTE.

This sequence belongs to the herpesviridae TRM2 protein family. In terms of assembly, associates with TRM1 and TRM3 to form the tripartite terminase complex.

It is found in the host nucleus. Component of the molecular motor that translocates viral genomic DNA in empty capsid during DNA packaging. Forms a tripartite terminase complex together with TRM1 and TRM3 in the host cytoplasm. Once the complex reaches the host nucleus, it interacts with the capsid portal vertex. This portal forms a ring in which genomic DNA is translocated into the capsid. This is Tripartite terminase subunit 2 from Homo sapiens (Human).